We begin with the raw amino-acid sequence, 141 residues long: uncharacterized protein (141 aa).

Residues 1 to 39 (MNNNNNNNNNNNNNNNNNNNNNNNNNSYDSNHSSSSYTS) show a composition bias toward low complexity. The segment at 1–48 (MNNNNNNNNNNNNNNNNNNNNNNNNNSYDSNHSSSSYTSENQNREQQF) is disordered. The helical transmembrane segment at 109–129 (FFCKIILVFICLVAIYSLVVI) threads the bilayer.

It is found in the membrane. This is an uncharacterized protein from Dictyostelium discoideum (Social amoeba).